Consider the following 251-residue polypeptide: Hydroxyacylglutathione hydrolase (251 aa).

Positions 53, 55, 57, 58, 110, 127, and 165 each coordinate Zn(2+).

This sequence belongs to the metallo-beta-lactamase superfamily. Glyoxalase II family. As to quaternary structure, monomer. Zn(2+) serves as cofactor.

The catalysed reaction is an S-(2-hydroxyacyl)glutathione + H2O = a 2-hydroxy carboxylate + glutathione + H(+). It functions in the pathway secondary metabolite metabolism; methylglyoxal degradation; (R)-lactate from methylglyoxal: step 2/2. Thiolesterase that catalyzes the hydrolysis of S-D-lactoyl-glutathione to form glutathione and D-lactic acid. The sequence is that of Hydroxyacylglutathione hydrolase from Shigella boydii serotype 18 (strain CDC 3083-94 / BS512).